The following is a 191-amino-acid chain: Cyclin-dependent kinase inhibitor 1 (191 aa).

The disordered stretch occupies residues 62-81 (LIHLEEEDKDGDTETSTYRR). The segment at 162-191 (QLKEKFKKKYNFDFEKEKPLEGRYEWVKLE) is required for inhibitory function and interaction with CDK kinase complexes.

The protein belongs to the CDI family. ICK/KRP subfamily. As to quaternary structure, specifically interacts with CDKA-1, but not with CDKB1-1. Interacts with CYCD2-1 and CYCD3-1. Post-translationally, ubiquitinated independently by RKP and SCF (SKP1-CUL1-FBL5/SKP2B) protein ligase complex, leading to proteasomal degradation. As to expression, expressed at low levels in roots, stems, leaves and flowers.

The protein resides in the nucleus. The protein localises to the nucleoplasm. Binds and inhibits CYCD2-1/CDKA-1 kinase complex activity. Regulates cell division which is crucial for plant growth, development and morphogenesis. Functions in turning cells from a mitotic to an endoreplicating cell cycle mode. Acts cell- and non-cell-autonomously to regulate endoreduplication by allowing S phase progression, but blocking entry into mitosis. Keeps on the one hand the plant cell cycle locally controlled, and on the other hand provides a possibility of linking cell cycle control in single cells with the supracellular organization of a tissue or an organ. May target specifically CDKA-1. This chain is Cyclin-dependent kinase inhibitor 1 (KRP1), found in Arabidopsis thaliana (Mouse-ear cress).